The sequence spans 113 residues: Small ribosomal subunit protein mS41 (113 aa).

The transit peptide at 1–22 directs the protein to the mitochondrion; sequence MLILKRIFIIRNFIFPFSNCRY.

This sequence belongs to the mitochondrion-specific ribosomal protein mS41 family. As to quaternary structure, component of the mitochondrial small ribosomal subunit (mt-SSU). Mature yeast 74S mitochondrial ribosomes consist of a small (37S) and a large (54S) subunit. The 37S small subunit contains a 15S ribosomal RNA (15S mt-rRNA) and at least 32 different proteins. The 54S large subunit contains a 21S rRNA (21S mt-rRNA) and at least 45 different proteins.

It is found in the mitochondrion. Functionally, component of the mitochondrial ribosome (mitoribosome), a dedicated translation machinery responsible for the synthesis of mitochondrial genome-encoded proteins, including at least some of the essential transmembrane subunits of the mitochondrial respiratory chain. The mitoribosomes are attached to the mitochondrial inner membrane and translation products are cotranslationally integrated into the membrane. mS41 is involved in telomere length regulation. The chain is Small ribosomal subunit protein mS41 (fyv4) from Schizosaccharomyces pombe (strain 972 / ATCC 24843) (Fission yeast).